The chain runs to 224 residues: Ribose-5-phosphate isomerase A (224 aa).

Substrate contacts are provided by residues 32-35 (TGST), 85-88 (DGAD), and 98-101 (KGGG). E107 acts as the Proton acceptor in catalysis. A substrate-binding site is contributed by K125.

The protein belongs to the ribose 5-phosphate isomerase family. In terms of assembly, homodimer.

The catalysed reaction is aldehydo-D-ribose 5-phosphate = D-ribulose 5-phosphate. Its pathway is carbohydrate degradation; pentose phosphate pathway; D-ribose 5-phosphate from D-ribulose 5-phosphate (non-oxidative stage): step 1/1. Catalyzes the reversible conversion of ribose-5-phosphate to ribulose 5-phosphate. The sequence is that of Ribose-5-phosphate isomerase A from Pseudomonas putida (strain W619).